A 590-amino-acid chain; its full sequence is Cyclin-dependent kinase-like 3 (590 aa).

Residues 4 to 286 (YETLGKVGEG…SSDLLHHEYF (283 aa)) enclose the Protein kinase domain. ATP contacts are provided by residues 10 to 18 (VGEGSYGTV) and lysine 33. The [NKR]KIAxRE signature appears at 45-51 (KIAMREI). The active-site Proton acceptor is aspartate 125. Phosphothreonine is present on threonine 158. Tyrosine 160 carries the post-translational modification Phosphotyrosine. Disordered regions lie at residues 459 to 508 (RAKK…SNEN) and 547 to 590 (LKRE…PDVE). A compositionally biased stretch (polar residues) spans 466 to 477 (SSQSIGQVMPNS). Composition is skewed to basic and acidic residues over residues 547-556 (LKRESKKTDS) and 580-590 (TERKKNLPDVE).

It belongs to the protein kinase superfamily. CMGC Ser/Thr protein kinase family. CDC2/CDKX subfamily.

The protein localises to the cytoplasm. The catalysed reaction is L-seryl-[protein] + ATP = O-phospho-L-seryl-[protein] + ADP + H(+). It catalyses the reaction L-threonyl-[protein] + ATP = O-phospho-L-threonyl-[protein] + ADP + H(+). In Macaca fascicularis (Crab-eating macaque), this protein is Cyclin-dependent kinase-like 3.